The primary structure comprises 600 residues: PWWP domain-containing protein 2B (600 aa).

5 disordered regions span residues 81 to 115, 143 to 171, 186 to 350, 366 to 408, and 426 to 477; these read ETGPLHPHHKDPEKDQPPKTAVSEPPPPLIPPVPA, WVPQPPPRTIKRTRRRLSRNRDPGRLILS, KSTV…LGDG, GCPR…PQGK, and DCTS…TVPP. Over residues 104–115 the composition is skewed to pro residues; it reads EPPPPLIPPVPA. Positions 151 to 160 are enriched in basic residues; sequence TIKRTRRRLS. A compositionally biased stretch (polar residues) spans 187–200; sequence STVSPQEASPSPLN. Ser190 and Ser210 each carry phosphoserine. Positions 239–252 are enriched in basic and acidic residues; that stretch reads EKREEDRVAGERVP. Position 254 is a phosphoserine (Ser254). Positions 286-297 are enriched in polar residues; that stretch reads PQQSLQNGSQDS. Residues 298 to 309 show a composition bias toward basic and acidic residues; it reads EVSRDVEPRGGG. Residues 328–339 are compositionally biased toward pro residues; it reads PVPPISDLPPPK. Low complexity predominate over residues 381–395; the sequence is DGSSHGLEDLSSGSS. Polar residues predominate over residues 443–456; sequence SSGSEVTSPDTGDL. Ser457 carries the post-translational modification Phosphoserine. The segment covering 457 to 468 has biased composition (low complexity); that stretch reads SSGDSASVPSSS. Residues 500–560 enclose the PWWP domain; it reads VGDIVWGKIH…ISKLSPFSEF (61 aa).

As to quaternary structure, component of a MTA1-specific subcomplex of the NuRD complex composed of PWWP2B, MTA1 and HDAC1 but does not contain CHD4 and MBD3. Interacts with MTA1, MTA2, MTA3, HDAC1, HDAC2, RBBP4, RBBP7, BRCC3 and ZNF516. Does not interact with CHD4 and MBD3. Deubiquitinated by BRCC3; leading to its stabilization. Expressed in the brown adipose tissue.

It is found in the nucleus. In terms of biological role, chromatin-binding protein that acts as an adapter between distinct nucleosome components (H3K36me3 or H2A.Z) and chromatin-modifying complexes, contributing to the regulation of the levels of histone acetylation at actively transcribed genes. Competes with CHD4 and MBD3 for interaction with MTA1 to form a NuRD subcomplex, preventing the formation of full NuRD complex (containing CHD4 and MBD3), leading to recruitment of HDACs to gene promoters resulting in turn in the deacetylation of nearby H3K27 and H2A.Z. Plays a role in facilitating transcriptional elongation through regulation of histone acetylation. Negatively regulates brown adipocyte thermogenesis by interacting with and stabilizing HDAC1 at the UCP1 gene promoter, thereby promoting histone deacetylation at the promoter leading to the repression of UCP1 expression. The chain is PWWP domain-containing protein 2B (Pwwp2b) from Mus musculus (Mouse).